The primary structure comprises 239 residues: Ribose-5-phosphate isomerase A (239 aa).

Substrate is bound by residues 40 to 43 (SGST), 96 to 99 (DGAD), and 110 to 113 (KGGG). Catalysis depends on glutamate 119, which acts as the Proton acceptor. Lysine 137 contributes to the substrate binding site.

The protein belongs to the ribose 5-phosphate isomerase family. Homodimer.

The enzyme catalyses aldehydo-D-ribose 5-phosphate = D-ribulose 5-phosphate. It functions in the pathway carbohydrate degradation; pentose phosphate pathway; D-ribose 5-phosphate from D-ribulose 5-phosphate (non-oxidative stage): step 1/1. Its function is as follows. Catalyzes the reversible conversion of ribose-5-phosphate to ribulose 5-phosphate. This chain is Ribose-5-phosphate isomerase A, found in Methanococcus maripaludis (strain C7 / ATCC BAA-1331).